The sequence spans 178 residues: Gamma-crystallin S (178 aa).

Position 2 is an N-acetylserine (Ser2). The interval 2 to 5 (SKTG) is N-terminal arm. 2 Beta/gamma crystallin 'Greek key' domains span residues 6–44 (TKIT…KVEG) and 45–87 (GTWA…RAVH). Residues 88–93 (LPSGGQ) form a connecting peptide region. 2 consecutive Beta/gamma crystallin 'Greek key' domains span residues 94 to 134 (YKIQ…KVLE) and 135 to 177 (GVWI…RRIV).

It belongs to the beta/gamma-crystallin family. In terms of assembly, monomer.

Its function is as follows. Crystallins are the dominant structural components of the vertebrate eye lens. The sequence is that of Gamma-crystallin S (CRYGS) from Homo sapiens (Human).